An 85-amino-acid polypeptide reads, in one-letter code: MFQQEVTITAPNGLHTRPAAQFVKEAKGFTSEITVTSNGKSASAKSLFKLQTLGLTQGTVVTISAEGEDEQKAVEHLVKLMAELE.

An HPr domain is found at 1–85; the sequence is MFQQEVTITA…HLVKLMAELE (85 aa). Catalysis depends on His15, which acts as the Pros-phosphohistidine intermediate.

Belongs to the HPr family.

The protein localises to the cytoplasm. General (non sugar-specific) component of the phosphoenolpyruvate-dependent sugar phosphotransferase system (sugar PTS). This major carbohydrate active-transport system catalyzes the phosphorylation of incoming sugar substrates concomitantly with their translocation across the cell membrane. The phosphoryl group from phosphoenolpyruvate (PEP) is transferred to the phosphoryl carrier protein HPr by enzyme I. Phospho-HPr then transfers it to the PTS EIIA domain. This chain is Phosphocarrier protein HPr (ptsH), found in Escherichia coli O157:H7.